Reading from the N-terminus, the 855-residue chain is MGPTNILAAFIAVSSLFIQSLALNPYAKSNLAVYWGQGAGQNRLSYFCEKTSFDIIVVGFINVFPDQGPAGWPGSNFGNQCADSYYYTKNGTKTKLLDGCYQIKEDLPKCKALGKTILLSLGGGAVHDFYEVKSEESALNFADFLWGAFGPLTPDWTGPRPFGEASVDGFDFDIEKGSNFGYSIMVRRLRELFLQDPLNRYYISAAPQCIMPDKYLSHAISNSAFDFIFIQFYNNPSCSAKRWVTNPKSVTYTVDDWVKYIRKSGNPLAKLFIGLPASKSAAAKEDYLTPGEATKIVSTYMAKYPSTFGGMMVWEATASENNKLGGLPYADIMKEVLLRCDPDPPTSTVTSTTSASTSTQTSSQSTTMETKTLSASTTPSSPSTVSPSSTMQTTSTGSTSIETVTTRSQEPPSTTISTRSASTEPVTTRSQEPPSTTISTRSASTETVTTRSQEPPSTTISTWSASTETSTSSQDSPSTTISTKSAPTGTVTTRSQDLPSTTISTRSPETETETATTKSQGSPSITLSTRSSSAETVSTRSQHSSSTTISTKSAPTETGTTSEHSTSMPVSTRSASTETVITRSQNSDSQSMTVSTRSPSTESITTRSQGSPSETFSTKSVPVDTISTELPSQTPTTIITGTPSDPVSAPTTTVPPNPTLTLAPSSSTTEDRTTITTIITTSYVTVCPTGFTTVTITYTTTYCPETASLTPTQPPIPGAPAPPPDGWTTIVTVCPQCAPTPTTVTLTVPTRSAFLPARTETRPVVTVVPVPENPIKNVKPSESGDFVTVTTAAPATVTKTLEYNNPVDSDVNVQPTGGSSPVEFEGSAMTVRSMDVVAKALITAGAAVLGLFLGL.

An N-terminal signal peptide occupies residues 1–22; that stretch reads MGPTNILAAFIAVSSLFIQSLA. The 312-residue stretch at 29–340 folds into the GH18 domain; sequence SNLAVYWGQG…DIMKEVLLRC (312 aa). Asn-90 carries N-linked (GlcNAc...) asparagine glycosylation. The active-site Proton donor is the Glu-175. Residues 341-672 are disordered; that stretch reads DPDPPTSTVT…APSSSTTEDR (332 aa). Positions 346–400 are enriched in low complexity; the sequence is TSTVTSTTSASTSTQTSSQSTTMETKTLSASTTPSSPSTVSPSSTMQTTSTGSTS. Residues 401 to 456 show a composition bias toward polar residues; sequence IETVTTRSQEPPSTTISTRSASTEPVTTRSQEPPSTTISTRSASTETVTTRSQEPP. Residues 457–483 are compositionally biased toward low complexity; it reads STTISTWSASTETSTSSQDSPSTTIST. Residues 484 to 521 are compositionally biased toward polar residues; sequence KSAPTGTVTTRSQDLPSTTISTRSPETETETATTKSQG. A compositionally biased stretch (low complexity) spans 522-533; it reads SPSITLSTRSSS. Residues 534-555 show a composition bias toward polar residues; that stretch reads AETVSTRSQHSSSTTISTKSAP. Residues 556–567 show a composition bias toward low complexity; that stretch reads TETGTTSEHSTS. Polar residues predominate over residues 568 to 641; it reads MPVSTRSAST…SQTPTTIITG (74 aa). Composition is skewed to low complexity over residues 642 to 652 and 659 to 672; these read TPSDPVSAPTT and TLTL…TEDR. A lipid anchor (GPI-anchor amidated glycine) is attached at Gly-826. A propeptide spans 827–855 (removed in mature form); it reads SAMTVRSMDVVAKALITAGAAVLGLFLGL.

It belongs to the glycosyl hydrolase 18 family. Chitinase class III subfamily.

It localises to the cell membrane. The enzyme catalyses Random endo-hydrolysis of N-acetyl-beta-D-glucosaminide (1-&gt;4)-beta-linkages in chitin and chitodextrins.. Functionally, may be associated with endosporulation. The sequence is that of Endochitinase 2 (CTS2) from Coccidioides posadasii (strain C735) (Valley fever fungus).